The primary structure comprises 95 residues: YcgL domain-containing protein Sden_1630 (95 aa).

Residues 1-85 (MICTVYKSRR…PKANLLEEHK (85 aa)) enclose the YcgL domain.

This is YcgL domain-containing protein Sden_1630 from Shewanella denitrificans (strain OS217 / ATCC BAA-1090 / DSM 15013).